The primary structure comprises 84 residues: Mitochondrial import inner membrane translocase subunit Tim9 (84 aa).

Positions 36–60 (CFQSCITNFRIRKLDDEEQLCVYKC) match the Twin CX3C motif motif. Cystine bridges form between Cys36-Cys60 and Cys40-Cys56.

The protein belongs to the small Tim family. As to quaternary structure, heterohexamer; composed of 3 copies of timm9 and 3 copies of timm10, named soluble 70 kDa complex. Associates directly with the TIM22 complex, whose core is composed of timm22. Interacts with the transmembrane regions of multi-pass transmembrane proteins in transit.

Its subcellular location is the mitochondrion inner membrane. Component of the TIM22 complex, a complex that mediates the import and insertion of multi-pass transmembrane proteins into the mitochondrial inner membrane. The TIM22 complex forms a twin-pore translocase that uses the membrane potential as external driving force. This is Mitochondrial import inner membrane translocase subunit Tim9 (timm9) from Dictyostelium discoideum (Social amoeba).